The following is a 306-amino-acid chain: Pantothenate kinase (306 aa).

91–98 (GSVAVGKS) serves as a coordination point for ATP.

Belongs to the prokaryotic pantothenate kinase family.

The protein localises to the cytoplasm. The catalysed reaction is (R)-pantothenate + ATP = (R)-4'-phosphopantothenate + ADP + H(+). The protein operates within cofactor biosynthesis; coenzyme A biosynthesis; CoA from (R)-pantothenate: step 1/5. The protein is Pantothenate kinase (coaA) of Streptococcus pyogenes serotype M18 (strain MGAS8232).